The chain runs to 606 residues: Electron transfer flavoprotein-ubiquinone oxidoreductase, mitochondrial (606 aa).

An FAD-binding site is contributed by 59 to 73 (VVIVGAGPSGLSTAI). A helical transmembrane segment spans residues 448-468 (PSLHWGTIPGLIYGALEMYIF). [4Fe-4S] cluster contacts are provided by C551, C575, C578, and C581.

It belongs to the ETF-QO/FixC family. Monomer. It depends on [4Fe-4S] cluster as a cofactor. FAD is required as a cofactor.

Its subcellular location is the mitochondrion inner membrane. It carries out the reaction a ubiquinone + reduced [electron-transfer flavoprotein] = a ubiquinol + oxidized [electron-transfer flavoprotein] + H(+). Its function is as follows. Accepts electrons from ETF and reduces ubiquinone. The chain is Electron transfer flavoprotein-ubiquinone oxidoreductase, mitochondrial (etfdh) from Dictyostelium discoideum (Social amoeba).